The primary structure comprises 166 residues: Salivary acidic proline-rich phosphoprotein 1/2 (166 aa).

The first 16 residues, 1–16 (MLLILLSVALLAFSSA), serve as a signal peptide directing secretion. The segment at 16-166 (AQDLDEDVSQ…QGPPQGQSPQ (151 aa)) is disordered. Q17 carries the post-translational modification Pyrrolidone carboxylic acid. The inhibits hydroxyapatite formation, binds to hydroxyapatite and calcium stretch occupies residues 17–46 (QDLDEDVSQEDVPLVISDGGDSEQFIDEER). Position 24 is a phosphoserine; by FAM20C (S24). S33 is modified (phosphoserine; alternate). O-linked (GlcA) serine; alternate glycans are attached at residues S33 and S38. At S38 the chain carries Phosphoserine; by FAM20C; alternate. 2 stretches are compositionally biased toward low complexity: residues 48–61 (GPPL…PSAG) and 68–82 (GPQQ…QQQQ). Composition is skewed to pro residues over residues 83-111 (GPPP…PQGP) and 137-159 (GPPP…PQGP).

Proteolytically cleaved; PRP-2, PRP-1, PIF-S and Db-S yield PRP-4, PRP-3 (protein A), PIF-F and Db-F, respectively. In terms of processing, a hexuronic acid was shown to be linked to Ser-33 in about 40% of the polypeptides. Neither the structure of the carbohydrate (whether glucuronic acid or an isomer of), nor the linkage (whether a glycoside or an ester) has been definitely established.

The protein resides in the secreted. Functionally, PRP's act as highly potent inhibitors of crystal growth of calcium phosphates. They provide a protective and reparative environment for dental enamel which is important for the integrity of the teeth. This is Salivary acidic proline-rich phosphoprotein 1/2 (PRH1) from Homo sapiens (Human).